A 514-amino-acid polypeptide reads, in one-letter code: Cytochrome P450 monooxygenase FUS8 (514 aa).

The helical transmembrane segment at 28-48 (LTVTKAVGAFIVLFIIIPKVF) threads the bilayer. N-linked (GlcNAc...) asparagine glycosylation is found at N225 and N443. C460 is a heme binding site.

It belongs to the cytochrome P450 family. The cofactor is heme.

It localises to the membrane. It participates in mycotoxin biosynthesis. Cytochrome P450 monooxygenase; part of the gene cluster that mediates the biosynthesis of the mycotoxin fusarin C. Within the cluster, FUS1, FUS2, FUS8 and FUS9 are sufficient for fusarin production. The roles of the other FUS members are yet undetermined. The fusarin C synthetase FUS1 is responsible for the condensation of one acetyl-coenzyme A (CoA) unit with six malonyl-CoA units and the amide linkage of the arising heptaketide and homoserine, subsequently releasing the first intermediate, prefusarin, as an alcohol with an open ring structure. The cytochrome P450 monooxygenase FUS8 participates in multiple oxidation processes at carbon C-20 and is able to use the FUS1 product as substrate, resulting in formation of 20-hydroxy-prefusarin. This reaction seems to be essential before the 2-pyrrolidone ring closure can be catalyzed by FUS2, generating 20-hydroxy-fusarin. FUS8 is able to further oxidizes carbon C-20 after ring closure, resulting in the formation of carboxy-fusarin C. As the last step, FUS9 methylates the hydroxyl group at C-21 to generate fusarin C. Fusarin C can then rearrange to epi-fusarin C, the (z)-isomers, and fusarin A and fusarin D. The sequence is that of Cytochrome P450 monooxygenase FUS8 from Gibberella moniliformis (strain M3125 / FGSC 7600) (Maize ear and stalk rot fungus).